Here is a 427-residue protein sequence, read N- to C-terminus: tRNA(Ile)-lysidine synthase (427 aa).

Residue 29-34 (SGGVDS) participates in ATP binding.

Belongs to the tRNA(Ile)-lysidine synthase family.

Its subcellular location is the cytoplasm. It catalyses the reaction cytidine(34) in tRNA(Ile2) + L-lysine + ATP = lysidine(34) in tRNA(Ile2) + AMP + diphosphate + H(+). Ligates lysine onto the cytidine present at position 34 of the AUA codon-specific tRNA(Ile) that contains the anticodon CAU, in an ATP-dependent manner. Cytidine is converted to lysidine, thus changing the amino acid specificity of the tRNA from methionine to isoleucine. The chain is tRNA(Ile)-lysidine synthase from Thermosipho africanus (strain TCF52B).